Here is a 2476-residue protein sequence, read N- to C-terminus: MGSLDDNTLQQVSVLFGPKYPEVELPAGHIRRYLSNQRNANWLHDAIRDLPSVWHDILRLWPAAEKLHGDARLRQLSAFLGGGTLRPDMAEPMNFLLVPATVLRHLVDFLELKEDKNYDVCDIQGFCVGFLAAIAAACWSDNEDEFGKVVSTVLRLAVYIGAAVDLDELCEQPARSIAVRWRTAQEHKLLTEVLTRYQGAYISCVTDENAVTVTVWDSQSVSFAKELEKHGLSVKTTTLRGRFHHSNHTQAVEDILQSCERNSRLCLPSKCHKRSLPRSNINGRVCEADSLFTVAVESILTTQANWKITVTATLDNMGQSDARSIIPIGAGQFVPRHARCRMLNIVEFNKGEHINGRRKMQSATALDVGVNVTAPETTAVPIAVTGMACRYPQADSVEELWRILDLGQCTVSPMPNSRLKSGSLQREPKGPFFGNYLARPDAFDHRFFGISAREAESMDPQQRVLLQVAYEAMESAGYCGLRRSKLPDDIGCYVGVGCDDYSENVGSRNATAFSATGTLQAFNSGRISHYFGWSGPSVTVDTACSSAAVAIHLACQAIRTNDCAIAVAGGVNIMTDPRWSQNLAGASFLSPTGASKAFDADANGYCRGEGAGLLVLRPLEAALRDGDPIHAVITGTSVNQGANCSPITVPDSNSQRSLYLKALSLSGLTPDVVGYVEAHGTGTQVGDPIEFESIRKTFSGPNRATKLYVGSIKDNIGHTETSSGVAGMLKTILMIQKRRIPKQANFRRLNPRITLNERNHIEIPTQSIDWEAEKRVAMVTNYGAAGSNAAIVLREPASTPATSNSAHRETLPSHVPFYVSARTEESLRSYCEALQSTIREVAQSGTNTVQHIAYNLARKQNRDMEHFVTFPAAAGEPSELMTRLGSIASAHTQVERRSQSFHPVIICFGGQTGDTASISRNLFESCELLRFHVDECENACNALDLPSLFPAIVSPFPNKDIVNLHCVLFSIQYATAKAWLDSGLQVTRMIGHSFGQLTALCVAGGLSLIDGMRLVATRAQLIQKHWGPHTGVMLSLRASKEKVQALLDAASGHADLACLNGPDNFVVAGDEESIRRIEIIATEKGMHVELKRLKNTHAFHSRLVDAILPGLSEVANTLTFRQLDIPVEACAEQEDDWLWVTGDKIVQHSRKPVFFHDAVERTLSRVDGPCVWLEAGTASPVINMVRRVVEASRPLKSHVYLPTDLSGAQAQANLAKVTCTLWSKAVPVQFWPFHPSETGYRWINLPPYQFAKTSHWIEYNPDAFRSPPQVPDQENVQEASLVRLLRQDGKEALFTINNKDNVFRMCTAGHAVANQNLCPASLYFELVVQAALLVSSTATKPTMYHIESLNICSPLVLGMPGAVLLQLTQQDESHGQWSFVLSTRDGLQDAVTHATGRVSLQAAGSNTGICARLSSLQRLLNLASWNSIATSPSSSGLKRSTVYQAFARAVNYADYYRGVEEVYAVGHEATGRVILPSSPTKCNPCDPILIDNFIQVAGIHVNCLSETHDDEVFVCSSVGDVLIGESFVRRDTAATVPWAVYSNYEPESKKKIVCDVFVLDHTTGALAVCMLSATFTGVSIQSLKRTLNRLSNHTARPTEAEQVSINVAAEATALSSTPVAHVSSSDGDLLAVQTMLGELLGISADELSAAAALGDIGVDSLMSTEVLTEINKRFGVAISNAELTQIPDVGGLVQRIFPGHSVVRIKTHSQGAVETEITITDREPKSISVDLAPVCDTSPTAFVDKASKLFATTRTSAEFSRKTRFAGFCDTVFPQQMELVTSYVVEAFHALGADLASLTPGQVVPPVKILPQHGKVMNQLVAVLEYSDLIERRESEIIRSQQPVGTVPSLILYKKILNKHAQHASEHKLLHTTGSRLAECLSGKADPLSLLFQNAEARALMTDVYSNAPMFKSATIQLAQYLKDLLFNLGTQREIKVLEIGAGTGGTTNYLVQELAAVPGLRFQYTFTDISSSLVTLARKRFKAYDFMRYTTLDIENDPSPELQGQYDIIISTNCIHATRNLITSCTNIRRLLRPEGILCLIELTRNLFWFDLVFGLLEGWWLFNDGRSHALAHERLWDHNLRQAGFNWVDWTDNDSAESDILRLIVASSTQPFYALEGDDECEADCNTVQEQTVLYNTRDGLELFADIYYPEKTDRSGAKRPIALLIHGGGHIMLSRKEIHHEQVRMLFDMGFLPVSIDYRLCPEVSLLDGPMQDACDALAWARNKLPQLQLQRRDILPDGNNVVAVGWSTGGHLAMTLAWTAPARGVSAPEAILSFYSPTDYTDPFWSKPNFPYRVDVSTSDIQTGNPLDALQDAPISGYNPPPSKRALGGWMAPSDPRSRIALYMNWTGQTLPVLFYGCNYRARAAESGQDYEVVLPEPILSEVQKVCPFSQISAGSYRAPTFLIHGTLDDLIPVQQAQRTHDKMQACGVDSDLRIVRDGLHLFDLEANFAGNQHAFQAVVDGYEFLRRHVGL.

The tract at residues 14–253 (VLFGPKYPEV…HHSNHTQAVE (240 aa)) is N-terminal acylcarrier protein transacylase domain (SAT). The 417-residue stretch at 379–795 (AVPIAVTGMA…GSNAAIVLRE (417 aa)) folds into the Ketosynthase family 3 (KS3) domain. Catalysis depends on for beta-ketoacyl synthase activity residues Cys-544, His-679, and His-718. Residues 906 to 1210 (ICFGGQTGDT…LPTDLSGAQA (305 aa)) are malonyl-CoA:ACP transacylase (MAT) domain. Residue Ser-993 is the For acyl/malonyl transferase activity of the active site. Residues 1277–1405 (QEASLVRLLR…GRVSLQAAGS (129 aa)) form an N-terminal hotdog fold region. Residues 1277–1584 (QEASLVRLLR…FTGVSIQSLK (308 aa)) enclose the PKS/mFAS DH domain. The segment at 1280-1583 (SLVRLLRQDG…TFTGVSIQSL (304 aa)) is product template (PT) domain. Residue His-1310 is the Proton acceptor; for dehydratase activity of the active site. Residues 1433 to 1584 (SSSGLKRSTV…FTGVSIQSLK (152 aa)) are C-terminal hotdog fold. Asp-1491 acts as the Proton donor; for dehydratase activity in catalysis. In terms of domain architecture, Carrier spans 1626-1700 (DGDLLAVQTM…GLVQRIFPGH (75 aa)). An O-(pantetheine 4'-phosphoryl)serine modification is found at Ser-1660. The segment at 1862–2095 (QHASEHKLLH…GFNWVDWTDN (234 aa)) is methyltransferase (CMeT) domain. Residues 2128-2476 (NTVQEQTVLY…YEFLRRHVGL (349 aa)) form a thioesterase (TE) domain region. Residues Ser-2251, Asp-2413, and His-2445 each act as for thioesterase activity in the active site.

It catalyses the reaction 3 malonyl-CoA + acetyl-CoA + 2 S-adenosyl-L-methionine = 3,5-dimethylorsellinate + 2 S-adenosyl-L-homocysteine + 3 CO2 + 4 CoA. Its pathway is secondary metabolite biosynthesis; terpenoid biosynthesis. Functionally, non-reducing polyketide synthase; part of the gene cluster A that mediates the biosynthesis of austinol and dehydroaustinol, two fungal meroterpenoids. The first step of the pathway is the synthesis of 3,5-dimethylorsellinic acid by the polyketide synthase ausA. 3,5-dimethylorsellinic acid is then prenylated by the polyprenyl transferase ausN. Further epoxidation by the FAD-dependent monooxygenase ausM and cyclization by the probable terpene cyclase ausL lead to the formation of protoaustinoid A. Protoaustinoid A is then oxidized to spiro-lactone preaustinoid A3 by the combined action of the FAD-binding monooxygenases ausB and ausC, and the dioxygenase ausE. Acid-catalyzed keto-rearrangement and ring contraction of the tetraketide portion of preaustinoid A3 by ausJ lead to the formation of preaustinoid A4. The aldo-keto reductase ausK, with the help of ausH, is involved in the next step by transforming preaustinoid A4 into isoaustinone which is in turn hydroxylated by the P450 monooxygenase ausI to form austinolide. Finally, the cytochrome P450 monooxygenase ausG modifies austinolide to austinol. Austinol can be further modified to dehydroaustinol which forms a diffusible complex with diorcinol that initiates conidiation. Due to genetic rearrangements of the clusters and the subsequent loss of some enzymes, the end products of the Emericella nidulans austinoid biosynthesis clusters are austinol and dehydroaustinol, even if additional enzymes, such as the O-acetyltransferase ausQ and the cytochrome P450 monooxygenase ausR are still functional. This is Non-reducing polyketide synthase ausA from Emericella nidulans (strain FGSC A4 / ATCC 38163 / CBS 112.46 / NRRL 194 / M139) (Aspergillus nidulans).